The primary structure comprises 37 residues: Large ribosomal subunit protein bL36 (37 aa).

It belongs to the bacterial ribosomal protein bL36 family.

The chain is Large ribosomal subunit protein bL36 from Psychromonas ingrahamii (strain DSM 17664 / CCUG 51855 / 37).